Consider the following 208-residue polypeptide: Ribonuclease HII (208 aa).

Positions 5-198 (PLIAGVDEVG…CQPRLEHDCR (194 aa)) constitute an RNase H type-2 domain. 3 residues coordinate a divalent metal cation: Asp11, Glu12, and Asp106.

It belongs to the RNase HII family. Mn(2+) is required as a cofactor. The cofactor is Mg(2+).

The protein localises to the cytoplasm. The catalysed reaction is Endonucleolytic cleavage to 5'-phosphomonoester.. Its function is as follows. Endonuclease that specifically degrades the RNA of RNA-DNA hybrids. The protein is Ribonuclease HII of Microcystis aeruginosa (strain NIES-843 / IAM M-2473).